The sequence spans 396 residues: Purine ribonucleoside efflux pump NepI (396 aa).

Over 1–21 the chain is Cytoplasmic; sequence MSEFIAENRGADAITRPNWSA. A helical membrane pass occupies residues 22-42; the sequence is VFSVAFCVACLIIVEFLPVSL. Residues 43–54 are Periplasmic-facing; sequence LTPMAQDLGISE. Residues 55–75 form a helical membrane-spanning segment; sequence GVAGQSVTVTAFVAMFASLFI. Over 76–85 the chain is Cytoplasmic; the sequence is TQTIQATDRR. Residues 86–106 form a helical membrane-spanning segment; the sequence is YVVILFAVLLTLSCLLVSFAN. Ser-107 is a topological domain (periplasmic). Residues 108–128 form a helical membrane-spanning segment; sequence FSLLLIGRACLGLALGGFWAI. Residues 129 to 147 are Cytoplasmic-facing; the sequence is SASLTMRLVPPRTVPKALS. Residues 148 to 168 traverse the membrane as a helical segment; the sequence is VIFGAVSIALVIAAPLGGFLG. Topologically, residues 169–175 are periplasmic; sequence ELIGWRN. The chain crosses the membrane as a helical span at residues 176 to 196; the sequence is VFNAAAAMGVLCIFWIIKSLP. At 197–215 the chain is on the cytoplasmic side; that stretch reads SLPGEPSHQKQNTFRLLQR. Residues 216–236 traverse the membrane as a helical segment; sequence PGVMAGMIAIFMSFAGQFAFF. Residues 237-255 lie on the Periplasmic side of the membrane; that stretch reads TYIRPVYMNLAGFGVDGLT. A helical transmembrane segment spans residues 256-276; it reads LVLLSFGIASFVGTSLSSFIL. The Cytoplasmic segment spans residues 277–281; that stretch reads KRSVK. A helical transmembrane segment spans residues 282–302; sequence LALAGAPFVLALSALVLTLWG. Residues 303-305 lie on the Periplasmic side of the membrane; it reads SDK. A helical transmembrane segment spans residues 306–326; the sequence is IVATGVAIIWGLTFALIPVGW. Topologically, residues 327–343 are cytoplasmic; sequence STWITRSLADQAEKAGS. A helical transmembrane segment spans residues 344–364; the sequence is IQVAVIQLANTCGAAIGGYAL. Topologically, residues 365–366 are periplasmic; that stretch reads DN. Residues 367 to 387 traverse the membrane as a helical segment; it reads IGLTSPLMLSGTLMLLTALLV. Topologically, residues 388-396 are cytoplasmic; it reads TAKVKMKKS.

This sequence belongs to the major facilitator superfamily. DHA1 family. NepI (TC 2.A.1.2.26) subfamily.

Its subcellular location is the cell inner membrane. The enzyme catalyses inosine(in) + H(+)(out) = inosine(out) + H(+)(in). The catalysed reaction is guanosine(in) + H(+)(out) = guanosine(out) + H(+)(in). Its function is as follows. Involved in the efflux of purine ribonucleosides, such as inosine and guanosine. The protein is Purine ribonucleoside efflux pump NepI of Escherichia coli O127:H6 (strain E2348/69 / EPEC).